A 1106-amino-acid chain; its full sequence is Probable LRR receptor-like serine/threonine-protein kinase At1g74360 (1106 aa).

Positions 1 to 34 are cleaved as a signal peptide; the sequence is MTMVTRVIMTDDDSQSLCFLCFLLFFFITAIAVA. Topologically, residues 35 to 736 are extracellular; it reads GDSLDSDREV…PRTLLLIWIS (702 aa). 7 LRR repeats span residues 86 to 109, 110 to 134, 136 to 156, 157 to 182, 184 to 204, 205 to 226, and 227 to 250; these read RSRV…NFSA, LTEL…LSRC, NLKH…LPGL, SNLE…LFCN, LVVA…IFNG, CRNL…WTGF, and GRLV…MFRG. N-linked (GlcNAc...) asparagine glycosylation is found at N93 and N106. N-linked (GlcNAc...) asparagine glycosylation is present at N141. N-linked (GlcNAc...) asparagine glycans are attached at residues N188 and N193. N-linked (GlcNAc...) asparagine glycans are attached at residues N242 and N251. LRR repeat units lie at residues 252-275, 276-299, 300-323, 325-346, 348-371, 372-396, 398-419, 420-443, 445-468, 470-492, 566-593, 594-617, 619-640, 641-664, and 666-690; these read CTLQ…VSNC, QNLN…IGSI, SSLK…LLNL, NLVF…IFGR, TQVK…NILK, LPNL…ISQI, SLKF…EYGN, MPGL…SFGK, TSLL…IGNC, SLLW…LTRM, VRTL…ISQM, DRLS…IGQL, LAFL…IGNL, KCLQ…LNDL, and ELSK…QVAT. 2 N-linked (GlcNAc...) asparagine glycosylation sites follow: N309 and N322. N-linked (GlcNAc...) asparagine glycosylation is found at N365, N374, N384, and N408. N-linked (GlcNAc...) asparagine glycosylation is found at N454 and N467. N-linked (GlcNAc...) asparagine glycans are attached at residues N623, N628, N652, N671, N709, and N713. Residues 737-757 traverse the membrane as a helical segment; sequence LALALAFIACLVVSGIVLMVV. Residues 758–1106 are Cytoplasmic-facing; the sequence is KASREAEIDL…GLSSQGYIEM (349 aa). T803 and T811 each carry phosphothreonine. Residues 814-1095 enclose the Protein kinase domain; that stretch reads FSEERVVGRG…VKISGKAELF (282 aa). ATP contacts are provided by residues 820 to 828 and K842; that span reads VGRGGYGTV. The active-site Proton acceptor is the D941. A Phosphotyrosine modification is found at Y983. At T991 the chain carries Phosphothreonine.

It belongs to the protein kinase superfamily. Ser/Thr protein kinase family.

The protein resides in the mitochondrion membrane. The enzyme catalyses L-seryl-[protein] + ATP = O-phospho-L-seryl-[protein] + ADP + H(+). The catalysed reaction is L-threonyl-[protein] + ATP = O-phospho-L-threonyl-[protein] + ADP + H(+). This chain is Probable LRR receptor-like serine/threonine-protein kinase At1g74360, found in Arabidopsis thaliana (Mouse-ear cress).